We begin with the raw amino-acid sequence, 622 residues long: MLNALTEKRTRGSMLWDYLTTVDHKKIAILYLVAGGFFFLVGGIEAMFIRIQLAKPENAFLSAQAYNEVMTMHGTTMIFLAAMPLLFALMNAVVPLQIGARDVSFPFLNALGFWLFFFGGIFLNLSWFLGGAPDAGWTSYASLSLHSKGHGIDFFVLGLQISGLGTLIAGINFLATIINMRAPGMTYMRLPLFTWTTFVASALILFAFPPLTVGLALMMLDRLFGTNFFNPELGGNTVIWEHLFWIFGHPEVYILILPAFGIFSEVIPVFARKRLFGYSSMVFAIVLIGFLGFMVWVHHMFTTGLGPIANAIFAVATMAIAIPTGIKIFNWLLTIWGGNVKYTTAMLYAVSFIPSFVLGGVTGVMLAAAAADYQFHDTYFVVAHFHYVIIGGVVFGLLAGVHFWWPKMFGKILHETMGKISFVLFFIGFHLTFFIQHFVGLMGMPRRVYTFLPGQGLETGNLISTIGAFFMAAAVILLLVNVIWTSVKGEYVGADPWHDGRTLEWTVSSPPPEYNFKQLPFVRGLDPLWIEKQAGHKSMTPAEPVDDIHMPNGSILPLIISFGLFVAAFGLLYRSDYAWGLPVIFIGLGITFITMLLRSVIDDHGYHIHKEELPNDDKGVKA.

At 1 to 27 the chain is on the extracellular side; the sequence is MLNALTEKRTRGSMLWDYLTTVDHKKI. Residues 28–46 form a helical membrane-spanning segment; it reads AILYLVAGGFFFLVGGIEA. The Cytoplasmic portion of the chain corresponds to 47–68; it reads MFIRIQLAKPENAFLSAQAYNE. Residues 69–88 traverse the membrane as a helical segment; sequence VMTMHGTTMIFLAAMPLLFA. His-73 is a binding site for Fe(II)-heme a. Topologically, residues 89–110 are extracellular; sequence LMNAVVPLQIGARDVSFPFLNA. Residues 111–128 traverse the membrane as a helical segment; the sequence is LGFWLFFFGGIFLNLSWF. Residues 129–159 are Cytoplasmic-facing; it reads LGGAPDAGWTSYASLSLHSKGHGIDFFVLGL. A helical transmembrane segment spans residues 160–178; sequence QISGLGTLIAGINFLATII. Over 179-196 the chain is Extracellular; it reads NMRAPGMTYMRLPLFTWT. A helical transmembrane segment spans residues 197 to 215; sequence TFVASALILFAFPPLTVGL. Over 216–241 the chain is Cytoplasmic; that stretch reads ALMMLDRLFGTNFFNPELGGNTVIWE. Residues 242 to 261 form a helical membrane-spanning segment; it reads HLFWIFGHPEVYILILPAFG. Residues His-249 and Tyr-253 each coordinate Cu cation. The 1'-histidyl-3'-tyrosine (His-Tyr) cross-link spans 249-253; the sequence is HPEVY. Residues 262–284 are Extracellular-facing; it reads IFSEVIPVFARKRLFGYSSMVFA. The helical transmembrane segment at 285 to 304 threads the bilayer; sequence IVLIGFLGFMVWVHHMFTTG. Residues His-298 and His-299 each coordinate Cu cation. Residues 305–312 are Cytoplasmic-facing; it reads LGPIANAI. Residues 313 to 331 form a helical membrane-spanning segment; it reads FAVATMAIAIPTGIKIFNW. Over 332 to 346 the chain is Extracellular; it reads LLTIWGGNVKYTTAM. A helical membrane pass occupies residues 347–366; it reads LYAVSFIPSFVLGGVTGVML. The Cytoplasmic portion of the chain corresponds to 367 to 374; the sequence is AAAAADYQ. A helical membrane pass occupies residues 375–394; sequence FHDTYFVVAHFHYVIIGGVV. Residue His-384 participates in heme a3 binding. Position 386 (His-386) interacts with Fe(II)-heme a. The Extracellular segment spans residues 395-421; the sequence is FGLLAGVHFWWPKMFGKILHETMGKIS. The helical transmembrane segment at 422–441 threads the bilayer; the sequence is FVLFFIGFHLTFFIQHFVGL. Over 442–459 the chain is Cytoplasmic; the sequence is MGMPRRVYTFLPGQGLET. A helical transmembrane segment spans residues 460 to 479; sequence GNLISTIGAFFMAAAVILLL. The Extracellular portion of the chain corresponds to 480-552; the sequence is VNVIWTSVKG…EPVDDIHMPN (73 aa). The helical transmembrane segment at 553-572 threads the bilayer; that stretch reads GSILPLIISFGLFVAAFGLL. At 573–580 the chain is on the cytoplasmic side; that stretch reads YRSDYAWG. Residues 581 to 604 form a helical membrane-spanning segment; it reads LPVIFIGLGITFITMLLRSVIDDH. Topologically, residues 605–622 are cytoplasmic; it reads GYHIHKEELPNDDKGVKA.

Belongs to the heme-copper respiratory oxidase family. It depends on Cu(2+) as a cofactor. Heme is required as a cofactor.

It is found in the cell membrane. It carries out the reaction 4 Fe(II)-[cytochrome c] + O2 + 8 H(+)(in) = 4 Fe(III)-[cytochrome c] + 2 H2O + 4 H(+)(out). It functions in the pathway energy metabolism; oxidative phosphorylation. In terms of biological role, cytochrome c oxidase is the component of the respiratory chain that catalyzes the reduction of oxygen to water. Subunits 1-3 form the functional core of the enzyme complex. Co I is the catalytic subunit of the enzyme. Electrons originating in cytochrome c are transferred via the copper A center of subunit 2 and heme a of subunit 1 to the bimetallic center formed by heme a3 and copper B. This cytochrome c oxidase shows proton pump activity across the membrane in addition to the electron transfer. The protein is Cytochrome c oxidase subunit 1 (ctaD) of Bacillus subtilis (strain 168).